The following is a 1110-amino-acid chain: Guanylate cyclase 2D (1110 aa).

Residues 1 to 66 (MAGLQQGCHP…ADSLSLPAWA (66 aa)) form the signal peptide. At 67 to 475 (RETFTLGVLG…PNTLCIRGVQ (409 aa)) the chain is on the extracellular side. Cysteines 121 and 149 form a disulfide. N-linked (GlcNAc...) asparagine glycans are attached at residues N304 and N374. A helical transmembrane segment spans residues 476–500 (PLGSLLTLTITCVLALVGGFLAYFI). At 501–1110 (RLGLQQLRLL…TGFAKLARVG (610 aa)) the chain is on the cytoplasmic side. The tract at residues 529–556 (TPSRRRPHVDSGSESRSVVDGGSPQSVI) is disordered. A Protein kinase domain is found at 541–818 (SESRSVVDGG…PSLDQIYTQF (278 aa)). The interaction with NCALD stretch occupies residues 880–921 (MGTTVEPEYFDQVTIYFSDIVGFTTISALSEPIEVVGFLNDL). In terms of domain architecture, Guanylate cyclase spans 893-1023 (TIYFSDIVGF…DTVNTASRME (131 aa)).

It belongs to the adenylyl cyclase class-4/guanylyl cyclase family. In terms of assembly, interacts (via the catalytic domain) with NCALD. As to expression, specifically expressed in a subpopulation of olfactory sensory neurons. Expressed in the cilia of the olfactory epithelium.

It is found in the cell projection. The protein resides in the cilium membrane. The catalysed reaction is GTP = 3',5'-cyclic GMP + diphosphate. Activated by Ca(2+). Activated by NCALD in a Ca(2+)-dependent fashion. In terms of biological role, functions as an olfactory receptor activated by a urine odorant, uroguanylin. Activated as well by the volatile semiochemicals carbon disulfide (CS2) and carbon dioxide (CO2). Has guanylate cyclase activity upon binding of the ligand. Activation of GUCY2D neurons leads to the cGMP-dependent activation of the CNGA3 channels, membrane depolarization and an increase in action potential frequency. Signaling pathways activated by GUCY2D may trigger social behaviors such as acquisition of food preference. This is Guanylate cyclase 2D (Gucy2d) from Rattus norvegicus (Rat).